We begin with the raw amino-acid sequence, 222 residues long: DNA-directed RNA polymerase V subunit 5A (222 aa).

Belongs to the archaeal Rpo5/eukaryotic RPB5 RNA polymerase subunit family. In terms of assembly, component of the RNA polymerase V complex. Expressed in roots, leaves, siliques and seeds, and to a lower level, in flower buds and flowers.

The protein localises to the nucleus. Functionally, DNA-dependent RNA polymerase catalyzes the transcription of DNA into RNA using the four ribonucleoside triphosphates as substrates. Component of RNA polymerase V involved in RNA-directed DNA methylation-dependent (RdDM) silencing of endogenous repeated sequences, including transposable elements. Required for establishment of DNA methylation. In Arabidopsis thaliana (Mouse-ear cress), this protein is DNA-directed RNA polymerase V subunit 5A (NRPE5A).